An 86-amino-acid chain; its full sequence is Large ribosomal subunit protein bL28 (86 aa).

This sequence belongs to the bacterial ribosomal protein bL28 family.

The chain is Large ribosomal subunit protein bL28 from Bacteroides fragilis (strain ATCC 25285 / DSM 2151 / CCUG 4856 / JCM 11019 / LMG 10263 / NCTC 9343 / Onslow / VPI 2553 / EN-2).